The primary structure comprises 160 residues: MKHLAIYPGSFDPLTKGHLDILQRSLGLFDKVIIAIAVNSNKSTLFSIEERLGFIREVTKGMKGLEIDTFQGLTVDYCNKVGANSIIRGLRAVTDFDYEYAISLMNKKLAPNVETVFLMSSGEYSFISSTIVKEVARHGRDVSNQVPEIVSKALLKKLSQ.

Serine 10 contacts substrate. ATP contacts are provided by residues 10–11 and histidine 18; that span reads SF. Residues lysine 42, threonine 74, and arginine 88 each contribute to the substrate site. ATP contacts are provided by residues 89–91, glutamate 99, and 124–130; these read GLR and YSFISST.

Belongs to the bacterial CoaD family. In terms of assembly, homohexamer. Requires Mg(2+) as cofactor.

Its subcellular location is the cytoplasm. It catalyses the reaction (R)-4'-phosphopantetheine + ATP + H(+) = 3'-dephospho-CoA + diphosphate. Its pathway is cofactor biosynthesis; coenzyme A biosynthesis; CoA from (R)-pantothenate: step 4/5. Its function is as follows. Reversibly transfers an adenylyl group from ATP to 4'-phosphopantetheine, yielding dephospho-CoA (dPCoA) and pyrophosphate. The chain is Phosphopantetheine adenylyltransferase from Leptospira interrogans serogroup Icterohaemorrhagiae serovar copenhageni (strain Fiocruz L1-130).